The following is a 339-amino-acid chain: Probable cytosolic iron-sulfur protein assembly protein CIAO1 (339 aa).

WD repeat units lie at residues 14-53 (HPDS…WICK), 59-98 (GHQR…FECV), 103-142 (GHEN…EYEC), 148-187 (SHTQ…WVCC), 192-231 (GHES…NEQG), 250-289 (FHSR…DPQQ), and 301-339 (AHSQ…SEGI). Positions 176 to 178 (LYR) match the LYR motif; required for interaction with HSC20 motif.

Belongs to the WD repeat CIA1 family. As to quaternary structure, component of the CIA complex. Interacts with CIAO2A and forms a complex with CIAO2B and MMS19; the interactions with CIAO2A and CIAO2B are mutually exclusive. Interacts with CHD1L, ERCC2, IREB2 and POLD1. Component of the MMXD complex, which includes CIAO1, ERCC2, CIAO2B, MMS19 and SLC25A5. Interacts with WT1. Interacts with CIAO3. Interacts (via LYR motif) with HSC20.

It is found in the cytoplasm. Key component of the cytosolic iron-sulfur protein assembly (CIA) complex, a multiprotein complex that mediates the incorporation of iron-sulfur cluster into extramitochondrial Fe/S proteins. As a CIA complex component, interacts specifically with CIAO2A or CIAO2B and MMS19 to assist different branches of iron-sulfur protein assembly, depending of its interactors. The complex CIAO1:CIAO2B:MMS19 binds to and facilitates the assembly of most cytosolic-nuclear Fe/S proteins. CIAO1:CIAO2A specifically matures ACO1 and stabilizes IREB2. Seems to specifically modulate the transactivation activity of WT1. As part of the mitotic spindle-associated MMXD complex it may play a role in chromosome segregation. In Bos taurus (Bovine), this protein is Probable cytosolic iron-sulfur protein assembly protein CIAO1.